The sequence spans 937 residues: Inactive tyrosine-protein kinase transmembrane receptor ROR1 (937 aa).

A signal peptide spans 1-29 (MHRPRRRGTRPPLLALLAALLLAARGAAA). Residues 30–406 (QETELSVSAE…KEKNKMEILY (377 aa)) are Extracellular-facing. The Ig-like C2-type domain occupies 42 to 147 (PTSSWNISSE…EVVSSTGVLF (106 aa)). N-linked (GlcNAc...) asparagine glycosylation is found at Asn-47 and Asn-66. 9 disulfide bridges follow: Cys-79–Cys-131, Cys-170–Cys-235, Cys-178–Cys-228, Cys-219–Cys-260, Cys-248–Cys-296, Cys-252–Cys-282, Cys-313–Cys-391, Cys-334–Cys-374, and Cys-362–Cys-386. Residues 165–299 (EEDGFCQPYR…SPEAANCIRI (135 aa)) enclose the FZ domain. Asn-184 carries an N-linked (GlcNAc...) asparagine glycan. The Kringle domain occupies 312–391 (KCYNSTGVDY…KSDLCDIPAC (80 aa)). N-linked (GlcNAc...) asparagine glycosylation occurs at Asn-315. The helical transmembrane segment at 407 to 427 (ILVPSVAIPLAIALLFFFICV) threads the bilayer. The Cytoplasmic portion of the chain corresponds to 428–937 (CRNNQKSSSA…HTESMISAEL (510 aa)). The Protein kinase domain occupies 473 to 746 (VRFMEELGEC…PRFKDIHVRL (274 aa)). ATP is bound by residues 479–487 (LGECAFGKI) and Lys-506. Position 645 is a phosphotyrosine; by autocatalysis (Tyr-645). A compositionally biased stretch (low complexity) spans 753-762 (SSHTSSTTPS). 2 disordered regions span residues 753–779 (SSHT…SPVS) and 833–890 (AAHY…HMSI). Over residues 763–779 (GGNATTQTTSLSASPVS) the composition is skewed to polar residues. Low complexity predominate over residues 854–864 (RSPSSASGSTS). The segment covering 865–880 (TGHVTSLPSSGSNQEA) has biased composition (polar residues).

Belongs to the protein kinase superfamily. Tyr protein kinase family. ROR subfamily. As to quaternary structure, interacts with ERBB2 and IGFBP5. As to expression, expressed strongly in human heart, lung and kidney, but weakly in the CNS. Isoform Short is strongly expressed in fetal and adult CNS and in a variety of human cancers, including those originating from CNS or PNS neuroectoderm.

Its subcellular location is the membrane. The protein resides in the cell projection. It localises to the axon. Functionally, has very low kinase activity in vitro and is unlikely to function as a tyrosine kinase in vivo. Receptor for ligand WNT5A which activate downstream NFkB signaling pathway and may result in the inhibition of WNT3A-mediated signaling. In inner ear, crucial for spiral ganglion neurons to innervate auditory hair cells. Via IGFBP5 ligand, forms a complex with ERBB2 to enhance CREB oncogenic signaling. In Homo sapiens (Human), this protein is Inactive tyrosine-protein kinase transmembrane receptor ROR1 (ROR1).